The sequence spans 626 residues: Transketolase-like protein 2 (626 aa).

Thiamine diphosphate is bound by residues Ser41, His78, and 124–126; that span reads GSL. Residue Asp156 participates in Mg(2+) binding. Residues Gly157 and Asn186 each contribute to the thiamine diphosphate site. Residues Asn186 and Leu188 each coordinate Mg(2+). Residues Lys248 and His262 each coordinate thiamine diphosphate. 2 residues coordinate substrate: His262 and Ser349. 2 residues coordinate thiamine diphosphate: Glu370 and Phe396. Glu370 functions as the Proton donor in the catalytic mechanism. Substrate is bound by residues His420 and Asp428. Gln432 provides a ligand contact to thiamine diphosphate.

The protein belongs to the transketolase family. Homodimer. It depends on Mg(2+) as a cofactor. The cofactor is Ca(2+). Requires Mn(2+) as cofactor. Co(2+) serves as cofactor. Thiamine diphosphate is required as a cofactor. Overexpressed in hepatoma cancer cells.

It catalyses the reaction D-sedoheptulose 7-phosphate + D-glyceraldehyde 3-phosphate = aldehydo-D-ribose 5-phosphate + D-xylulose 5-phosphate. Plays an essential role in total transketolase activity and cell proliferation in cancer cells; after transfection with anti-TKTL1 siRNA, total transketolase activity dramatically decreases and proliferation was significantly inhibited in cancer cells. Plays a pivotal role in carcinogenesis. In Homo sapiens (Human), this protein is Transketolase-like protein 2 (TKTL2).